Here is a 141-residue protein sequence, read N- to C-terminus: Nucleoside diphosphate kinase (141 aa).

Residues Lys-9, Phe-57, Arg-85, Thr-91, Arg-102, and Asn-112 each coordinate ATP. His-115 (pros-phosphohistidine intermediate) is an active-site residue.

This sequence belongs to the NDK family. In terms of assembly, homotetramer. Mg(2+) is required as a cofactor.

The protein resides in the cytoplasm. It catalyses the reaction a 2'-deoxyribonucleoside 5'-diphosphate + ATP = a 2'-deoxyribonucleoside 5'-triphosphate + ADP. The catalysed reaction is a ribonucleoside 5'-diphosphate + ATP = a ribonucleoside 5'-triphosphate + ADP. Its function is as follows. Major role in the synthesis of nucleoside triphosphates other than ATP. The ATP gamma phosphate is transferred to the NDP beta phosphate via a ping-pong mechanism, using a phosphorylated active-site intermediate. The chain is Nucleoside diphosphate kinase from Chlamydia abortus (strain DSM 27085 / S26/3) (Chlamydophila abortus).